Reading from the N-terminus, the 192-residue chain is Interferon (192 aa).

The N-terminal stretch at 1–30 (MAVPASPQHPRGYGILLLTLLMKALAAAAA) is a signal peptide. 3 disulfides stabilise this stretch: cysteine 31–cysteine 128, cysteine 60–cysteine 154, and cysteine 67–cysteine 167. N-linked (GlcNAc...) asparagine glycosylation is found at asparagine 70 and asparagine 77.

It belongs to the alpha/beta interferon family.

It localises to the secreted. Its function is as follows. Has antiviral activities. The polypeptide is Interferon (Meleagris gallopavo (Wild turkey)).